A 277-amino-acid polypeptide reads, in one-letter code: Formamidopyrimidine-DNA glycosylase (277 aa).

Catalysis depends on Pro-2, which acts as the Schiff-base intermediate with DNA. Glu-3 functions as the Proton donor in the catalytic mechanism. The active-site Proton donor; for beta-elimination activity is the Lys-60. Residues His-94, Arg-113, and Arg-158 each coordinate DNA. The FPG-type zinc finger occupies 243 to 277; sequence WVYNRAGEPCKVCGDVIQRIKLGGRSSHFCRQCQV. Arg-267 functions as the Proton donor; for delta-elimination activity in the catalytic mechanism.

This sequence belongs to the FPG family. Monomer. The cofactor is Zn(2+).

The catalysed reaction is Hydrolysis of DNA containing ring-opened 7-methylguanine residues, releasing 2,6-diamino-4-hydroxy-5-(N-methyl)formamidopyrimidine.. It catalyses the reaction 2'-deoxyribonucleotide-(2'-deoxyribose 5'-phosphate)-2'-deoxyribonucleotide-DNA = a 3'-end 2'-deoxyribonucleotide-(2,3-dehydro-2,3-deoxyribose 5'-phosphate)-DNA + a 5'-end 5'-phospho-2'-deoxyribonucleoside-DNA + H(+). Involved in base excision repair of DNA damaged by oxidation or by mutagenic agents. Acts as a DNA glycosylase that recognizes and removes damaged bases. Has a preference for oxidized purines, such as 7,8-dihydro-8-oxoguanine (8-oxoG). Has AP (apurinic/apyrimidinic) lyase activity and introduces nicks in the DNA strand. Cleaves the DNA backbone by beta-delta elimination to generate a single-strand break at the site of the removed base with both 3'- and 5'-phosphates. This chain is Formamidopyrimidine-DNA glycosylase, found in Trichormus variabilis (strain ATCC 29413 / PCC 7937) (Anabaena variabilis).